The sequence spans 408 residues: Argininosuccinate synthase (408 aa).

ATP-binding positions include 10–18 (AYSGGLDTS) and A37. Positions 90 and 95 each coordinate L-citrulline. G120 lines the ATP pocket. L-aspartate is bound by residues T122, N126, and D127. An L-citrulline-binding site is contributed by N126. 5 residues coordinate L-citrulline: R130, S181, S190, E266, and Y278.

Belongs to the argininosuccinate synthase family. Type 1 subfamily. As to quaternary structure, homotetramer.

It is found in the cytoplasm. The enzyme catalyses L-citrulline + L-aspartate + ATP = 2-(N(omega)-L-arginino)succinate + AMP + diphosphate + H(+). The protein operates within amino-acid biosynthesis; L-arginine biosynthesis; L-arginine from L-ornithine and carbamoyl phosphate: step 2/3. In Chromobacterium violaceum (strain ATCC 12472 / DSM 30191 / JCM 1249 / CCUG 213 / NBRC 12614 / NCIMB 9131 / NCTC 9757 / MK), this protein is Argininosuccinate synthase.